The following is a 593-amino-acid chain: Chaperone protein DnaK (593 aa).

Threonine 181 carries the phosphothreonine; by autocatalysis modification.

Belongs to the heat shock protein 70 family.

Functionally, acts as a chaperone. The sequence is that of Chaperone protein DnaK from Mycoplasmoides gallisepticum (strain R(low / passage 15 / clone 2)) (Mycoplasma gallisepticum).